A 116-amino-acid polypeptide reads, in one-letter code: Protein BIC2 (116 aa).

2 disordered regions span residues 1 to 33 (MKNT…TCFP) and 95 to 116 (DSGD…ESSC).

The protein localises to the nucleus. Its function is as follows. Regulates the blue-light dependent dimerization of CRY2 and formation of photobodies. Inhibits CRY phosphorylation. The protein is Protein BIC2 of Arabidopsis thaliana (Mouse-ear cress).